We begin with the raw amino-acid sequence, 177 residues long: Baseplate hub assembly protein gp28 (177 aa).

In terms of assembly, the gp27 and gp28 proteins seem to combine to form a small hub precursor during morphogenesis.

In terms of biological role, baseplate hub assembly chaperone involved in the tail assembly. This Enterobacteria phage T4 (Bacteriophage T4) protein is Baseplate hub assembly protein gp28 (28).